We begin with the raw amino-acid sequence, 111 residues long: Cornifelin homolog (111 aa).

It belongs to the cornifelin family.

In Xenopus tropicalis (Western clawed frog), this protein is Cornifelin homolog (cnfn).